A 199-amino-acid polypeptide reads, in one-letter code: Elongation factor Ts, chloroplastic (199 aa).

It belongs to the EF-Ts family.

It is found in the plastid. Its subcellular location is the chloroplast. Associates with the EF-Tu.GDP complex and induces the exchange of GDP to GTP. It remains bound to the aminoacyl-tRNA.EF-Tu.GTP complex up to the GTP hydrolysis stage on the ribosome. The protein is Elongation factor Ts, chloroplastic (tsf) of Galdieria sulphuraria (Red alga).